Consider the following 412-residue polypeptide: MALLAQQLPRRFNSVKLTSFIKAKQVTKRSARAGKAVLPGFSAQPLLSSDTSFLRRGIKTYRTLFWNRFHSASTNRTKSSAESTLLPSVAEQQERILSLESELPLEEVDDLPPLSPLQSVSEEEAIQIAAYSPLPISSFTLADYVDHSKTLQKLVQLGVDLSKIEKHPDAANLLLRLDFEKHIKQILLFLKDLGLEDNQLGPFLTKNYAIFSEDLENLKTRVAYLQSKNFSKTDIARMVKNAPFLLSFSVERLDNRLGFFQKELELNVKKTRDLVVRLPRLLTGSLEPVKENMKVYHLELGFKHNEIQHMVIKIPKMLTANKRKLTEIFDYVHNVMNIPHHIIVKFPQLFNTRVFKIKERHLFLAYLGRAQYDPAKPNYVSLDKFVSFPDKIFCKEIAKASLNDFEKFLKTL.

The transit peptide at 1–67 (MALLAQQLPR…IKTYRTLFWN (67 aa)) directs the protein to the mitochondrion.

This sequence belongs to the mTERF family.

Its subcellular location is the mitochondrion. Its function is as follows. Binds promoter DNA and regulates initiation of transcription. Required for normal mitochondrial transcription and translation, and for normal assembly of mitochondrial respiratory complexes. Required for normal mitochondrial function. Maintains 16S rRNA levels and functions in mitochondrial ribosome assembly by regulating the biogenesis of the 39S ribosomal subunit. The protein is Transcription termination factor 3, mitochondrial (Mterf3) of Mus musculus (Mouse).